A 206-amino-acid chain; its full sequence is Large ribosomal subunit protein bL25 (206 aa).

This sequence belongs to the bacterial ribosomal protein bL25 family. CTC subfamily. In terms of assembly, part of the 50S ribosomal subunit; part of the 5S rRNA/L5/L18/L25 subcomplex. Contacts the 5S rRNA. Binds to the 5S rRNA independently of L5 and L18.

Its function is as follows. This is one of the proteins that binds to the 5S RNA in the ribosome where it forms part of the central protuberance. The protein is Large ribosomal subunit protein bL25 of Ralstonia nicotianae (strain ATCC BAA-1114 / GMI1000) (Ralstonia solanacearum).